A 139-amino-acid polypeptide reads, in one-letter code: D-ribose pyranase (139 aa).

His20 functions as the Proton donor in the catalytic mechanism. Substrate contacts are provided by residues Asp28, His106, and 128–130; that span reads YAN.

It belongs to the RbsD / FucU family. RbsD subfamily. Homodecamer.

It localises to the cytoplasm. The enzyme catalyses beta-D-ribopyranose = beta-D-ribofuranose. Its pathway is carbohydrate metabolism; D-ribose degradation; D-ribose 5-phosphate from beta-D-ribopyranose: step 1/2. Its function is as follows. Catalyzes the interconversion of beta-pyran and beta-furan forms of D-ribose. This Escherichia coli O139:H28 (strain E24377A / ETEC) protein is D-ribose pyranase.